We begin with the raw amino-acid sequence, 160 residues long: NADH-quinone oxidoreductase subunit B (160 aa).

Cysteine 37, cysteine 38, cysteine 102, and cysteine 132 together coordinate [4Fe-4S] cluster.

It belongs to the complex I 20 kDa subunit family. NDH-1 is composed of 14 different subunits. Subunits NuoB, C, D, E, F, and G constitute the peripheral sector of the complex. [4Fe-4S] cluster serves as cofactor.

The protein localises to the cell inner membrane. It catalyses the reaction a quinone + NADH + 5 H(+)(in) = a quinol + NAD(+) + 4 H(+)(out). Its function is as follows. NDH-1 shuttles electrons from NADH, via FMN and iron-sulfur (Fe-S) centers, to quinones in the respiratory chain. Couples the redox reaction to proton translocation (for every two electrons transferred, four hydrogen ions are translocated across the cytoplasmic membrane), and thus conserves the redox energy in a proton gradient. This Neisseria gonorrhoeae (strain NCCP11945) protein is NADH-quinone oxidoreductase subunit B.